Reading from the N-terminus, the 109-residue chain is Large ribosomal subunit protein uL22 (109 aa).

It belongs to the universal ribosomal protein uL22 family. In terms of assembly, part of the 50S ribosomal subunit.

Its function is as follows. This protein binds specifically to 23S rRNA; its binding is stimulated by other ribosomal proteins, e.g. L4, L17, and L20. It is important during the early stages of 50S assembly. It makes multiple contacts with different domains of the 23S rRNA in the assembled 50S subunit and ribosome. In terms of biological role, the globular domain of the protein is located near the polypeptide exit tunnel on the outside of the subunit, while an extended beta-hairpin is found that lines the wall of the exit tunnel in the center of the 70S ribosome. This chain is Large ribosomal subunit protein uL22, found in Polaromonas naphthalenivorans (strain CJ2).